The chain runs to 360 residues: Outer mitochondrial transmembrane helix translocase (360 aa).

The Mitochondrial intermembrane segment spans residues 1–15 (MVHGEAFSRPLSRNE). A helical membrane pass occupies residues 16–34 (VVGLIFRLTIFGAVTYFTI). Topologically, residues 35 to 360 (KWMVDAIDPT…QNVLMHVSLD (326 aa)) are cytoplasmic. Residue 133-140 (GPPGCGKT) coordinates ATP.

It belongs to the AAA ATPase family. MSP1 subfamily.

The protein resides in the mitochondrion outer membrane. Its subcellular location is the peroxisome membrane. The protein localises to the postsynaptic cell membrane. The enzyme catalyses [protein]-with a C-terminal TM segment(out) + ATP + H2O = [protein]-with a C-terminal TM segment(in) + ADP + phosphate + H(+). Its function is as follows. Outer mitochondrial translocase required to remove mislocalized tail-anchored transmembrane proteins on mitochondria. Specifically recognizes and binds tail-anchored transmembrane proteins: acts as a dislocase that mediates the ATP-dependent extraction of mistargeted tail-anchored transmembrane proteins from the mitochondrion outer membrane. Also plays a critical role in regulating the surface expression of AMPA receptors (AMPAR), thereby regulating synaptic plasticity and learning and memory. This Xenopus tropicalis (Western clawed frog) protein is Outer mitochondrial transmembrane helix translocase.